We begin with the raw amino-acid sequence, 2035 residues long: Envoplakin (2035 aa).

Over residues 1–27 (MFKGLSKGSQGKGSPKGSPAKGSPKGS) the composition is skewed to low complexity. Disordered regions lie at residues 1 to 37 (MFKG…AATQ) and 63 to 84 (KLQQ…QETG). The globular 1 stretch occupies residues 1 to 841 (MFKGLSKGSQ…LEPALAVSAP (841 aa)). The 4 X 4 AA tandem repeats of K-G-S-P stretch occupies residues 12–28 (KGSPKGSPAKGSPKGSP). Positions 71–84 (GEQNQALQHQQETG) are enriched in polar residues. The stretch at 229–330 (YTHLQGCTKQ…LCICQESQLQ (102 aa)) is one Spectrin repeat. Residues 400–419 (QEVAPLPQRRNPSKQPLHVD) are disordered. Residues 413–470 (KQPLHVDSICDWDSGEVQLLRGERYTLKDNADPYTWLVQGPGGETKSAPAACLCIPAP) enclose the SH3 domain. Positions 842-1664 (KRLRVISLQE…EKERTLRDLH (823 aa)) form a coiled coil. The segment at 842-1674 (KRLRVISLQE…TKVSREELNQ (833 aa)) is central fibrous rod domain. The Plectin 1 repeat unit spans residues 1186 to 1227 (KQKPKVQLQERVSEIFQVLPETEQEIRRLRAQLQETGSKKSG). Ser1576 is modified (phosphoserine). Basic and acidic residues predominate over residues 1607–1631 (KQQKARQLQEEGRLLSQKTESERQK). A disordered region spans residues 1607-1637 (KQQKARQLQEEGRLLSQKTESERQKAAQRSQ). Residues 1675–2035 (ETQTRETNLS…SPTLPRSCVR (361 aa)) form a globular 2 region. A Plectin 2 repeat occupies 1679–1714 (RETNLSTKICILEPETGNDMSPYEAYKRGVIDRGQY). Position 1800 is a phosphoserine (Ser1800). Plectin repeat units follow at residues 1819–1856 (FGLT…PITG), 1857–1894 (QKLL…NTST), 1895–1932 (QRLL…QESV), 1933–1970 (LPHL…EDLG), and 1971–2008 (QLLQ…PLSG). Ser2026 is modified (phosphoserine).

It belongs to the plakin or cytolinker family. As to quaternary structure, may form a homodimer or a heterodimer with PPL.

Its subcellular location is the cell junction. It is found in the desmosome. It localises to the cornified envelope. The protein localises to the cytoplasm. The protein resides in the cytoskeleton. Component of the cornified envelope of keratinocytes. May link the cornified envelope to desmosomes and intermediate filaments. The sequence is that of Envoplakin (Evpl) from Mus musculus (Mouse).